The sequence spans 376 residues: MYG1 exonuclease (376 aa).

The N-terminal 47 residues, 1–47 (MGHRFLRGLLTLLLPPPPLYTRHRMLGPESVPPPKRSRSKLMAPPRI), are a transit peptide targeting the mitochondrion. Ser120 is subject to Phosphoserine. An N6-acetyllysine mark is found at Lys267 and Lys273.

This sequence belongs to the MYG1 family. As to expression, ubiquitously expressed, with highest levels in testis.

The protein localises to the nucleus. The protein resides in the nucleoplasm. It localises to the mitochondrion matrix. Its subcellular location is the nucleolus. In terms of biological role, 3'-5' RNA exonuclease which cleaves in situ on specific transcripts in both nucleus and mitochondrion. Involved in regulating spatially segregated organellar RNA processing, acts as a coordinator of nucleo-mitochondrial crosstalk. In nucleolus, processes pre-ribosomal RNA involved in ribosome assembly and alters cytoplasmic translation. In mitochondrial matrix, processes 3'-termini of the mito-ribosomal and messenger RNAs and controls translation of mitochondrial proteins. This Homo sapiens (Human) protein is MYG1 exonuclease.